Reading from the N-terminus, the 258-residue chain is uncharacterized protein (258 aa).

An N-terminal signal peptide occupies residues 1–20; it reads MKCFQKLYIFILILIVLMAG. Cysteine 21 carries the N-palmitoyl cysteine lipid modification. Residue cysteine 21 is the site of S-diacylglycerol cysteine attachment.

This sequence belongs to the staphylococcal tandem lipoprotein family.

It is found in the cell membrane. This is an uncharacterized protein from Staphylococcus aureus (strain COL).